A 681-amino-acid chain; its full sequence is tRNA wybutosine-synthesizing protein 4 (681 aa).

Positions 1 to 11 are enriched in basic residues; sequence MSNKNQRKTKS. Residues 1–21 are disordered; sequence MSNKNQRKTKSKDREVRKTND. S-adenosyl-L-methionine contacts are provided by residues Arg-66, Gly-92, Asp-119, 165 to 166, and Glu-193; that span reads NL.

Belongs to the methyltransferase superfamily. LCMT family.

The catalysed reaction is 7-[(3S)-3-amino-3-carboxypropyl]wyosine(37) in tRNA(Phe) + S-adenosyl-L-methionine = 7-[(3S)-(3-amino-3-methoxycarbonyl)propyl]wyosine(37) in tRNA(Phe) + S-adenosyl-L-homocysteine. It catalyses the reaction 7-[(3S)-(3-amino-3-methoxycarbonyl)propyl]wyosine(37) in tRNA(Phe) + S-adenosyl-L-methionine + CO2 = wybutosine(37) in tRNA(Phe) + S-adenosyl-L-homocysteine + 2 H(+). It participates in tRNA modification; wybutosine-tRNA(Phe) biosynthesis. In terms of biological role, probable S-adenosyl-L-methionine-dependent methyltransferase that acts as a component of the wybutosine biosynthesis pathway. Wybutosine is a hyper modified guanosine with a tricyclic base found at the 3'-position adjacent to the anticodon of eukaryotic phenylalanine tRNA. May methylate the carboxyl group of leucine residues to form alpha-leucine ester residues. This chain is tRNA wybutosine-synthesizing protein 4 (ppm2), found in Schizosaccharomyces pombe (strain 972 / ATCC 24843) (Fission yeast).